Reading from the N-terminus, the 146-residue chain is MDATKTTKGAGGRKGGPRKKSVTKSIKAGLQFPVGRIGRYLKKGRYAQRVGSGAPIYLAAVLEYLAAEVLELAGNAARDNKKSRIIPRHVLLAVRNDEELGKLLAGVTIASGGVLPNINPVLLPKKSAVAEEKSPKAKAGKSPKKA.

Position 1 is an N-acetylmethionine (methionine 1). The tract at residues 1-24 (MDATKTTKGAGGRKGGPRKKSVTK) is disordered. The SPKK motif motif lies at 142–145 (SPKK).

The protein belongs to the histone H2A family. The nucleosome is a histone octamer containing two molecules each of H2A, H2B, H3 and H4 assembled in one H3-H4 heterotetramer and two H2A-H2B heterodimers. The octamer wraps approximately 147 bp of DNA. In terms of tissue distribution, high expression in meristematic tissues, in cells of the root pericycle and in shoot cortical cells undergoing endoduplication of their DNA.

The protein localises to the nucleus. It localises to the chromosome. Core component of nucleosome. Nucleosomes wrap and compact DNA into chromatin, limiting DNA accessibility to the cellular machineries which require DNA as a template. Histones thereby play a central role in transcription regulation, DNA repair, DNA replication and chromosomal stability. DNA accessibility is regulated via a complex set of post-translational modifications of histones, also called histone code, and nucleosome remodeling. The protein is Histone H2A.1 of Solanum lycopersicum (Tomato).